A 225-amino-acid polypeptide reads, in one-letter code: Two-component response regulator ARR8 (225 aa).

The Response regulatory domain occupies 10–145 (HVLAVDDSLF…DLTKLKPHMM (136 aa)). A 4-aspartylphosphate modification is found at D78.

The protein belongs to the ARR family. Type-A subfamily. Two-component system major event consists of a His-to-Asp phosphorelay between a sensor histidine kinase (HK) and a response regulator (RR). In plants, the His-to-Asp phosphorelay involves an additional intermediate named Histidine-containing phosphotransfer protein (HPt). This multistep phosphorelay consists of a His-Asp-His-Asp sequential transfer of a phosphate group between first a His and an Asp of the HK protein, followed by the transfer to a conserved His of the HPt protein and finally the transfer to an Asp in the receiver domain of the RR protein. As to expression, predominantly expressed in roots.

It localises to the nucleus. Its function is as follows. Functions as a response regulator involved in His-to-Asp phosphorelay signal transduction system. Phosphorylation of the Asp residue in the receiver domain activates the ability of the protein to promote the transcription of target genes. Type-A response regulators seem to act as negative regulators of the cytokinin signaling. This is Two-component response regulator ARR8 (ARR8) from Arabidopsis thaliana (Mouse-ear cress).